Here is a 147-residue protein sequence, read N- to C-terminus: Insertion element IS402 uncharacterized 16.2 kDa protein (147 aa).

The tract at residues 106–147 (DSSSIRAVGAGQKLGQTPPIARDPVPSTTSSPTPTVRRSPRS) is disordered. Residues 129–147 (PVPSTTSSPTPTVRRSPRS) are compositionally biased toward low complexity.

The protein belongs to the transposase 6 family.

In Burkholderia cepacia (Pseudomonas cepacia), this protein is Insertion element IS402 uncharacterized 16.2 kDa protein.